We begin with the raw amino-acid sequence, 315 residues long: Calumenin (315 aa).

Residues 1 to 19 form the signal peptide; it reads MDLRQFLMCLSLCTAFALS. Residue Tyr-47 is modified to Phosphotyrosine. Phosphothreonine is present on Thr-65. EF-hand domains are found at residues 68–103, 104–139, 151–186, 188–223, 229–264, and 265–300; these read ESKE…AQKK, YIYD…TYLD, PIMV…EEYD, MKDI…HDGN, WVKT…SDYD, and HAEA…FVGS. Ser-69 carries the phosphoserine modification. Ca(2+) is bound by residues Asp-81, Asp-83, Asp-85, Glu-92, Asp-117, Asn-119, Asp-121, and Glu-128. N-linked (GlcNAc...) asparagine glycosylation occurs at Asn-131. 13 residues coordinate Ca(2+): Asp-164, Asp-166, Asp-168, Glu-175, Asp-201, Asn-203, Asp-205, Glu-212, Asp-242, Asn-244, Asp-246, Lys-248, and Glu-253. Position 254 is a phosphothreonine (Thr-254). Residues Ser-261 and Ser-277 each carry the phosphoserine modification. Ca(2+) is bound by residues Asp-278, Asp-280, Asp-282, Lys-284, and Glu-289. The Prevents secretion from ER motif lies at 312–315; sequence HDEF.

Belongs to the CREC family. Binds crotoxin. Interacts with GGCX.

The protein localises to the endoplasmic reticulum membrane. The protein resides in the golgi apparatus. Its subcellular location is the secreted. It localises to the melanosome. It is found in the sarcoplasmic reticulum lumen. Functionally, involved in regulation of vitamin K-dependent carboxylation of multiple N-terminal glutamate residues. Seems to inhibit gamma-carboxylase GGCX. Binds 7 calcium ions with a low affinity. This Rattus norvegicus (Rat) protein is Calumenin (Calu).